The primary structure comprises 138 residues: MPASATAAWHCPPLCLPPLPASAPTSPPNPATRPAPGPGRRARCPQSAHPAPTRGALTFWAPGSWPRVLLVPRSPGPVLRAPRLPHPAARARRRAWHGARLPGSPARAGRTFQRGLVSNSWAHAIFLPRPPNVLELQV.

The span at 22–37 shows a compositional bias: pro residues; the sequence is SAPTSPPNPATRPAPG. Disordered regions lie at residues 22–55 and 81–107; these read SAPT…PTRG and APRL…SPAR.

In Homo sapiens (Human), this protein is Proline-rich protein 34 (PRR34).